Reading from the N-terminus, the 263-residue chain is MPLTPSSTRGIPETGAIPKHIAIIMDGNGRWARKRFLPRIAGHTQGVEAVRGTIKACIERGVSHLTIFAFSSENWRRPAEEVKLLMQLFLAALEREVTGLHENGVRFRVIGDISKFDPKIVDFVQQGEALTAGNSRLNFTVAANYGGRWDIMQAVRKMITENPDSAVTFDEPDIARHLALADAPEPDLFIRTGGECRISNFLLWQLAYTELYFTDTLWPDFDASALDEAIASYRKRERRFGRTSEQIAGQQENKNTVSNEDRV.

Aspartate 26 is an active-site residue. Position 26 (aspartate 26) interacts with Mg(2+). Substrate is bound by residues 27-30, tryptophan 31, arginine 39, histidine 43, and 71-73; these read GNGR and SSE. The Proton acceptor role is filled by asparagine 74. Residues tryptophan 75, arginine 77, arginine 191, and 197–199 each bind substrate; that span reads RIS. Glutamate 210 lines the Mg(2+) pocket. The segment at 241–263 is disordered; it reads GRTSEQIAGQQENKNTVSNEDRV. The span at 243 to 263 shows a compositional bias: polar residues; sequence TSEQIAGQQENKNTVSNEDRV.

The protein belongs to the UPP synthase family. In terms of assembly, homodimer. The cofactor is Mg(2+).

Catalyzes the condensation of isopentenyl diphosphate (IPP) with allylic pyrophosphates generating different type of terpenoids. This chain is Isoprenyl transferase, found in Nitrosomonas europaea (strain ATCC 19718 / CIP 103999 / KCTC 2705 / NBRC 14298).